The primary structure comprises 562 residues: NAD-dependent malic enzyme 1 (562 aa).

Residue tyrosine 101 is the Proton donor of the active site. Arginine 154 is an NAD(+) binding site. Catalysis depends on lysine 172, which acts as the Proton acceptor. 3 residues coordinate a divalent metal cation: glutamate 243, aspartate 244, and aspartate 267. Positions 267 and 415 each coordinate NAD(+).

Belongs to the malic enzymes family. In terms of assembly, homotetramer. Mg(2+) serves as cofactor. Requires Mn(2+) as cofactor.

It catalyses the reaction (S)-malate + NAD(+) = pyruvate + CO2 + NADH. The catalysed reaction is oxaloacetate + H(+) = pyruvate + CO2. This is NAD-dependent malic enzyme 1 from Vibrio vulnificus (strain YJ016).